The following is a 107-amino-acid chain: Cytochrome c2 (107 aa).

4 residues coordinate heme c: C14, C17, H18, and M80.

Belongs to the cytochrome c family. Binds 1 heme c group covalently per subunit.

In terms of biological role, cytochrome c2 is found mainly in purple, non-sulfur, photosynthetic bacteria where it functions as the electron donor to the oxidized bacteriochlorophyll in the photophosphorylation pathway. However, it may also have a role in the respiratory chain and is found in some non-photosynthetic bacteria. The polypeptide is Cytochrome c2 (Rhodoblastus acidophilus (Rhodopseudomonas acidophila)).